Reading from the N-terminus, the 75-residue chain is UPF0291 protein lin1342 (75 aa).

Residues 55 to 75 (IDPKGNDVTPHKIKQMRKNKK) are disordered. Positions 65–75 (HKIKQMRKNKK) are enriched in basic residues.

It belongs to the UPF0291 family.

Its subcellular location is the cytoplasm. The chain is UPF0291 protein lin1342 from Listeria innocua serovar 6a (strain ATCC BAA-680 / CLIP 11262).